The chain runs to 199 residues: Homeobox protein ceh-19 (199 aa).

The tract at residues 1–42 (MAFNIESLLEKKSNPVEEGNDFEEENDSEKNGEEDEEEEEKN) is disordered. The segment covering 18 to 40 (EGNDFEEENDSEKNGEEDEEEEE) has biased composition (acidic residues). The segment at residues 94 to 153 (ERKPRQAYSARQLDRLETEFQTDKYLSVNKRIQLSQTLNLTETQIKTWFQNRRTKWKKQL) is a DNA-binding region (homeobox).

The protein localises to the nucleus. In terms of biological role, probable transcription factor. Required for MC motor neuron differentiation and function, including role in modulating pharyngeal pumping. Regulates gene expression of FMRFamide-like neuropeptide flp-2 in MC motor neurons. May act downstream of transcription factor pha-4. The chain is Homeobox protein ceh-19 (ceh-19) from Caenorhabditis elegans.